A 485-amino-acid chain; its full sequence is Probable glycine dehydrogenase (decarboxylating) subunit 2 (485 aa).

N6-(pyridoxal phosphate)lysine is present on lysine 273.

This sequence belongs to the GcvP family. C-terminal subunit subfamily. As to quaternary structure, the glycine cleavage system is composed of four proteins: P, T, L and H. In this organism, the P 'protein' is a heterodimer of two subunits. Pyridoxal 5'-phosphate is required as a cofactor.

It catalyses the reaction N(6)-[(R)-lipoyl]-L-lysyl-[glycine-cleavage complex H protein] + glycine + H(+) = N(6)-[(R)-S(8)-aminomethyldihydrolipoyl]-L-lysyl-[glycine-cleavage complex H protein] + CO2. The glycine cleavage system catalyzes the degradation of glycine. The P protein binds the alpha-amino group of glycine through its pyridoxal phosphate cofactor; CO(2) is released and the remaining methylamine moiety is then transferred to the lipoamide cofactor of the H protein. This chain is Probable glycine dehydrogenase (decarboxylating) subunit 2, found in Bacillus licheniformis (strain ATCC 14580 / DSM 13 / JCM 2505 / CCUG 7422 / NBRC 12200 / NCIMB 9375 / NCTC 10341 / NRRL NRS-1264 / Gibson 46).